The following is a 137-amino-acid chain: MANQLSAEELKKKLSEMQFYVTQNRGTEPPFTGRLLHNKRDGVYHCLVCEAPLFHSHTKYDSGCGWPSFYQPVSKEAIRYIDDFSHGMQRVEIRCGNCDAHLGHVFPDGPQPTGERYCVNSASLAFSDEKNGDQLKG.

One can recognise a MsrB domain in the interval 7-129 (AEELKKKLSE…NSASLAFSDE (123 aa)). Zn(2+)-binding residues include C46, C49, C95, and C98. C118 serves as the catalytic Nucleophile.

Belongs to the MsrB Met sulfoxide reductase family. The cofactor is Zn(2+).

The catalysed reaction is L-methionyl-[protein] + [thioredoxin]-disulfide + H2O = L-methionyl-(R)-S-oxide-[protein] + [thioredoxin]-dithiol. The polypeptide is Peptide methionine sulfoxide reductase MsrB (Salmonella arizonae (strain ATCC BAA-731 / CDC346-86 / RSK2980)).